The sequence spans 157 residues: Protein FAM162B (157 aa).

The chain crosses the membrane as a helical span at residues 104 to 123; the sequence is ACYIMIGLTIVACFAVIVSA.

Belongs to the UPF0389 family.

It localises to the membrane. The polypeptide is Protein FAM162B (Fam162b) (Mus musculus (Mouse)).